The following is a 620-amino-acid chain: 1-deoxy-D-xylulose-5-phosphate synthase (620 aa).

Thiamine diphosphate is bound by residues histidine 80 and 121–123; that span reads GHS. Residue aspartate 152 participates in Mg(2+) binding. Residues 153-154, asparagine 181, tyrosine 288, and glutamate 370 each bind thiamine diphosphate; that span reads GA. Asparagine 181 contributes to the Mg(2+) binding site.

This sequence belongs to the transketolase family. DXPS subfamily. In terms of assembly, homodimer. Requires Mg(2+) as cofactor. Thiamine diphosphate is required as a cofactor.

It carries out the reaction D-glyceraldehyde 3-phosphate + pyruvate + H(+) = 1-deoxy-D-xylulose 5-phosphate + CO2. It participates in metabolic intermediate biosynthesis; 1-deoxy-D-xylulose 5-phosphate biosynthesis; 1-deoxy-D-xylulose 5-phosphate from D-glyceraldehyde 3-phosphate and pyruvate: step 1/1. Functionally, catalyzes the acyloin condensation reaction between C atoms 2 and 3 of pyruvate and glyceraldehyde 3-phosphate to yield 1-deoxy-D-xylulose-5-phosphate (DXP). The sequence is that of 1-deoxy-D-xylulose-5-phosphate synthase from Klebsiella pneumoniae (strain 342).